A 519-amino-acid chain; its full sequence is Anthranilate synthase component 1 (519 aa).

L-tryptophan-binding positions include Ser-39 and 290–292 (PYM). Position 327–328 (327–328 (GT)) interacts with chorismate. Mg(2+) is bound at residue Glu-360. Chorismate contacts are provided by residues Tyr-448, Arg-468, 482–484 (GAG), and Gly-484. Glu-497 is a Mg(2+) binding site.

It belongs to the anthranilate synthase component I family. In terms of assembly, heterotetramer consisting of two non-identical subunits: a beta subunit (TrpG) and a large alpha subunit (TrpE). Mg(2+) is required as a cofactor.

It carries out the reaction chorismate + L-glutamine = anthranilate + pyruvate + L-glutamate + H(+). Its pathway is amino-acid biosynthesis; L-tryptophan biosynthesis; L-tryptophan from chorismate: step 1/5. Its activity is regulated as follows. Feedback inhibited by tryptophan. Its function is as follows. Part of a heterotetrameric complex that catalyzes the two-step biosynthesis of anthranilate, an intermediate in the biosynthesis of L-tryptophan. In the first step, the glutamine-binding beta subunit (TrpG) of anthranilate synthase (AS) provides the glutamine amidotransferase activity which generates ammonia as a substrate that, along with chorismate, is used in the second step, catalyzed by the large alpha subunit of AS (TrpE) to produce anthranilate. In the absence of TrpG, TrpE can synthesize anthranilate directly from chorismate and high concentrations of ammonia. The sequence is that of Anthranilate synthase component 1 (trpE) from Serratia marcescens.